Consider the following 42-residue polypeptide: Delta-hexatoxin-Ar1a (42 aa).

Intrachain disulfides connect Cys1-Cys15, Cys8-Cys20, Cys14-Cys31, and Cys16-Cys42.

The protein belongs to the neurotoxin 06 (delta-actx) family. Expressed by the venom gland.

The protein resides in the secreted. Its function is as follows. Inhibits tetrodotoxin-sensitive voltage-gated sodium channels (Nav) by binding to site 3. It slows the inactivation, causes a prolongation of action potential duration resulting in repetitive firing in autonomic and motor nerve fibers. Does not depolarize the resting potential. Does not affect tetrodotoxin-resistant sodium channels. This lethal neurotoxin is active on both insect and mammalian voltage-gated sodium channels. The sequence is that of Delta-hexatoxin-Ar1a from Atrax robustus (Sydney funnel-web spider).